We begin with the raw amino-acid sequence, 217 residues long: Oxygen-insensitive NAD(P)H nitroreductase (217 aa).

Residue 10 to 14 (RYSTK) coordinates FMN. NAD(+) is bound by residues Lys-14, Thr-41, Asn-71, Lys-74, and Arg-107. Asn-71 is an FMN binding site. FMN-binding positions include 165–166 (EG) and 205–207 (KSR).

The protein belongs to the nitroreductase family. As to quaternary structure, homodimer. The cofactor is FMN.

In terms of biological role, reduction of a variety of nitroaromatic compounds using NADH (and to lesser extent NADPH) as source of reducing equivalents; two electrons are transferred. Capable of reducing nitrofurazone. This Salmonella typhimurium (strain LT2 / SGSC1412 / ATCC 700720) protein is Oxygen-insensitive NAD(P)H nitroreductase.